The chain runs to 464 residues: Argininosuccinate lyase (464 aa).

The protein belongs to the lyase 1 family. Argininosuccinate lyase subfamily.

The protein resides in the cytoplasm. The catalysed reaction is 2-(N(omega)-L-arginino)succinate = fumarate + L-arginine. It participates in amino-acid biosynthesis; L-arginine biosynthesis; L-arginine from L-ornithine and carbamoyl phosphate: step 3/3. In Azotobacter vinelandii (strain DJ / ATCC BAA-1303), this protein is Argininosuccinate lyase.